The sequence spans 603 residues: Elongation factor 4 (603 aa).

The region spanning 2–184 (NHIRNFSIIA…AVVALIPAPK (183 aa)) is the tr-type G domain. Residues 14–19 (DHGKST) and 131–134 (NKMD) each bind GTP.

Belongs to the TRAFAC class translation factor GTPase superfamily. Classic translation factor GTPase family. LepA subfamily.

The protein localises to the cell inner membrane. It catalyses the reaction GTP + H2O = GDP + phosphate + H(+). Required for accurate and efficient protein synthesis under certain stress conditions. May act as a fidelity factor of the translation reaction, by catalyzing a one-codon backward translocation of tRNAs on improperly translocated ribosomes. Back-translocation proceeds from a post-translocation (POST) complex to a pre-translocation (PRE) complex, thus giving elongation factor G a second chance to translocate the tRNAs correctly. Binds to ribosomes in a GTP-dependent manner. This chain is Elongation factor 4, found in Polaromonas naphthalenivorans (strain CJ2).